The primary structure comprises 227 residues: Isopentenyl-diphosphate Delta-isomerase 1 (227 aa).

A substrate-binding site is contributed by K36. Mg(2+)-binding residues include H40 and H51. The Nudix hydrolase domain occupies L49 to I199. Residues R70 and K74 each coordinate substrate. Residue C86 is part of the active site. A substrate-binding site is contributed by S87. Mg(2+)-binding residues include E146 and E148. E148 is a catalytic residue. The residue at position 176 (K176) is an N6-acetyllysine. The Microbody targeting signal signature appears at Y225–I227.

This sequence belongs to the IPP isomerase type 1 family. Monomer. The cofactor is Mg(2+).

The protein resides in the peroxisome. It catalyses the reaction isopentenyl diphosphate = dimethylallyl diphosphate. It functions in the pathway isoprenoid biosynthesis; dimethylallyl diphosphate biosynthesis; dimethylallyl diphosphate from isopentenyl diphosphate: step 1/1. Catalyzes the 1,3-allylic rearrangement of the homoallylic substrate isopentenyl (IPP) to its highly electrophilic allylic isomer, dimethylallyl diphosphate (DMAPP). The protein is Isopentenyl-diphosphate Delta-isomerase 1 (IDI1) of Pongo abelii (Sumatran orangutan).